The sequence spans 452 residues: UPF0210 protein CHY_1509 (452 aa).

Belongs to the UPF0210 family. Homodimer.

The chain is UPF0210 protein CHY_1509 from Carboxydothermus hydrogenoformans (strain ATCC BAA-161 / DSM 6008 / Z-2901).